Here is a 160-residue protein sequence, read N- to C-terminus: Large ribosomal subunit protein eL21 (160 aa).

Belongs to the eukaryotic ribosomal protein eL21 family.

This Dictyostelium discoideum (Social amoeba) protein is Large ribosomal subunit protein eL21 (rpl21).